The following is a 254-amino-acid chain: Phosphorelay intermediate protein rdeA (254 aa).

Residues E26–W123 enclose the HPt domain. The residue at position 65 (H65) is a Phosphohistidine. The segment at D124–K254 is disordered. Over residues G131 to P143 the composition is skewed to acidic residues. Positions N146–S160 are enriched in low complexity. Residues K166–K186 are compositionally biased toward basic and acidic residues. A compositionally biased stretch (low complexity) spans N220–S238. A compositionally biased stretch (polar residues) spans K239–K254.

The phosphorelay mechanism involves the sequential transfer of a phosphate group from 'Asp-212' of pde2 to His-65 of rdeA. In vitro, dephosphorylated by dokA.

The protein resides in the cytoplasm. Phosphorelay protein that supplies phosphate to regA or accepts phosphate from regA; depending on the relative concentration of the phosphodonor proteins. In vitro, acts as a substrate for cheA (bacterial kinase). Plays a role in the development. ypd1 (yeast) can complement rdeA defect. This is Phosphorelay intermediate protein rdeA (rdeA) from Dictyostelium discoideum (Social amoeba).